We begin with the raw amino-acid sequence, 277 residues long: Histone-lysine N-methyltransferase set-17 (277 aa).

In terms of domain architecture, SET spans 135-246; it reads FRIEESKLPN…INQELLVWYG (112 aa). Tyr-245 contacts S-adenosyl-L-methionine.

This sequence belongs to the class V-like SAM-binding methyltransferase superfamily. In terms of tissue distribution, expressed in the germline. Predominantly expressed in primary spermatocytes. Also expressed in the oocyte-producing germline of hermaphrodites.

It localises to the nucleus. It carries out the reaction N(6)-methyl-L-lysyl(4)-[histone H3] + S-adenosyl-L-methionine = N(6),N(6)-dimethyl-L-lysyl(4)-[histone H3] + S-adenosyl-L-homocysteine + H(+). The enzyme catalyses L-lysyl(4)-[histone H3] + S-adenosyl-L-methionine = N(6)-methyl-L-lysyl(4)-[histone H3] + S-adenosyl-L-homocysteine + H(+). In terms of biological role, histone methyltransferase that specifically mono- and di-methylates 'Lys-4' of histone H3 in vitro. Does not tri-methylate 'Lys-4' of histone H3 in vitro. Promotes spermatid development and fertility by positively regulating the transcription of spermatocyte-specific genes in primary spermatocytes. Together with spr-5, required for transgenerational fertility. The chain is Histone-lysine N-methyltransferase set-17 from Caenorhabditis elegans.